The sequence spans 77 residues: Acyl carrier protein (77 aa).

The Carrier domain maps to 1–76; sequence MADFEKVKSI…DVTKFIDNLK (76 aa). Position 36 is an O-(pantetheine 4'-phosphoryl)serine (serine 36).

This sequence belongs to the acyl carrier protein (ACP) family. In terms of processing, 4'-phosphopantetheine is transferred from CoA to a specific serine of apo-ACP by AcpS. This modification is essential for activity because fatty acids are bound in thioester linkage to the sulfhydryl of the prosthetic group.

It localises to the cytoplasm. It participates in lipid metabolism; fatty acid biosynthesis. Functionally, carrier of the growing fatty acid chain in fatty acid biosynthesis. In Leptospira borgpetersenii serovar Hardjo-bovis (strain JB197), this protein is Acyl carrier protein.